The chain runs to 660 residues: Solute carrier family 5 member 4B (660 aa).

Residues 1–27 (MASTLSPSITPQTEEPPVVPVRIQNAA) are Cytoplasmic-facing. The chain crosses the membrane as a helical span at residues 28–48 (DISVIVIYFIVVLAVGLWSMV). At 49-54 (RSNRGT) the chain is on the extracellular side. Residues 55 to 75 (VGGFFLAGHDMAWWPMGASLF) traverse the membrane as a helical segment. The Cytoplasmic segment spans residues 76–82 (ASNIGSN). A helical membrane pass occupies residues 83-103 (HFVGLAGTGAASGIAIAAVEW). Over 104-105 (NA) the chain is Extracellular. A helical membrane pass occupies residues 106-126 (LLMVLVLGWVFLPIYIKAGVL). At 127-142 (TMPEYLRKRFGGKRLQ) the chain is on the cytoplasmic side. A helical transmembrane segment spans residues 143 to 163 (IYLSVLSLFIMVALQTSSIIF). The Extracellular segment spans residues 164-166 (SGA). A helical transmembrane segment spans residues 167–187 (IFIQLALGLNLYLAVFILLAI). The Cytoplasmic portion of the chain corresponds to 188-208 (TAFYTVAGGLASVIYTDSVQT). The chain crosses the membrane as a helical span at residues 209–229 (FIMLLGSLILMGFAFAEVGGY). Residues 230–277 (ESFTEKYMNAIPSVVEGDNLTISPKCYTPQPDSFHVFRDPVTGDIPWP) lie on the Extracellular side of the membrane. The helical transmembrane segment at 278-298 (GLIFGMTILAIWYWCADQVIV) threads the bilayer. At 299-313 (QRCLCGKNMSHVKAA) the chain is on the cytoplasmic side. Residues 314 to 334 (CILCGYLKLLPMFLMVMPGMI) traverse the membrane as a helical segment. Residues 335-380 (SRILYTDKVACVVPSECEKQCGTAVGCTNYAYPTLVLELMPDGLRG) are Extracellular-facing. A helical membrane pass occupies residues 381–401 (LMLSVMLASLMSSLTSIFNSA). The Cytoplasmic portion of the chain corresponds to 402-423 (STLFTIDLYTKIRKKASERELM). A helical transmembrane segment spans residues 424-444 (IAGRIFGMVLIAVSILWVPLV). The Extracellular portion of the chain corresponds to 445-455 (QVSQNGQLFHY). A helical transmembrane segment spans residues 456-476 (IGSVSSYLGPPLGAVFMLAIF). Residues 477–484 (FKRVNEQG) lie on the Cytoplasmic side of the membrane. A helical membrane pass occupies residues 485-505 (AFWGLMVGLVVGLIRLIAEFV). The Extracellular segment spans residues 506–526 (YGTGSCVAPSNCPKIICGVHY). The chain crosses the membrane as a helical span at residues 527–547 (MYFAIILFFVSIIVILGVSFL). At 548 to 639 (TEPIPDVHLY…DTSEKPLWRT (92 aa)) the chain is on the cytoplasmic side. The chain crosses the membrane as a helical span at residues 640–660 (VMNINAVLLLGVAVFVHAYFA).

Belongs to the sodium:solute symporter (SSF) (TC 2.A.21) family. In terms of tissue distribution, expressed in small intestine. Expressed in kidney.

The protein resides in the cell membrane. The enzyme catalyses D-glucose(out) + 2 Na(+)(out) = D-glucose(in) + 2 Na(+)(in). Inhibited by phlorizin. In terms of biological role, low-affinity sodium/D-glucose symporter. Generates D-glucose-induced depolarization in a pH-independent manner. In Mus musculus (Mouse), this protein is Solute carrier family 5 member 4B.